We begin with the raw amino-acid sequence, 462 residues long: Spermatogenesis- and oogenesis-specific basic helix-loop-helix-containing protein 2 (462 aa).

One can recognise a bHLH domain in the interval 200–251 (KASFLHSSKEKLRRERIKFCCEQLRTLLPYVKGRKSDVASVIEATVDYVKQV). Positions 422–462 (PASSRTASSSIFRGFRESDSGHQASQQPTGPSLQPQDSSYF) are disordered. A compositionally biased stretch (polar residues) spans 442-462 (GHQASQQPTGPSLQPQDSSYF).

The protein localises to the nucleus. Probable transcription factor, which may be involved in spermatogenesis and oogenesis. The protein is Spermatogenesis- and oogenesis-specific basic helix-loop-helix-containing protein 2 (Sohlh2) of Rattus norvegicus (Rat).